Here is a 375-residue protein sequence, read N- to C-terminus: G-protein coupled estrogen receptor 1 (375 aa).

Methionine 1 is subject to N-acetylmethionine. The Extracellular segment spans residues 1–62 (MAATTPAQDV…QQYVIALFLS (62 aa)). N-linked (GlcNAc...) asparagine glycosylation is found at asparagine 32 and asparagine 44. Residues 63-84 (CLYTIFLFPIGFVGNILILVVN) traverse the membrane as a helical segment. Over 85–96 (ISFREKMTIPDL) the chain is Cytoplasmic. A helical membrane pass occupies residues 97–120 (YFINLAAADLILVADSLIEVFNLD). Residues 121–132 (EQYYDIAVLCTF) are Extracellular-facing. Cysteine 130 and cysteine 207 are oxidised to a cystine. A helical membrane pass occupies residues 133–153 (MSLFLQINMYSSVFFLTWMSF). The Cytoplasmic portion of the chain corresponds to 154 to 175 (DRYLALAKAMRCGLFRTKHHAR). The helical transmembrane segment at 176 to 194 (LSCGLIWMASVSATLVPFT) threads the bilayer. The Extracellular portion of the chain corresponds to 195 to 220 (AVHLRHTEEACFCFADVREVQWLEVT). Residues 221-236 (LGFIVPFAIIGLCYSL) traverse the membrane as a helical segment. Residues 237–259 (IVRALIRAHRHRGLRPRRQKALR) are Cytoplasmic-facing. Residues 260 to 280 (MIFAVVLVFFICWLPENVFIS) form a helical membrane-spanning segment. The Extracellular portion of the chain corresponds to 281 to 306 (VHLLQWAQPGDTPCKQSFRHAYPLTG). Residues 307–327 (HIVNLAAFSNSCLSPLIYSFL) form a helical membrane-spanning segment. At 328-375 (GETFRDKLRLYVAQKTSLPALNRFCHATLKAVIPDSTEQSDVKFSSAV) the chain is on the cytoplasmic side.

Belongs to the G-protein coupled receptor 1 family. As to quaternary structure, homodimer. Heterodimer; heterodimerizes with other G-protein-coupled receptor (GPCRs) like CRHR1, HTR1A and PAQR8. Interacts with RAMP3; the interaction confers proper subcellular localization and function in cardioprotection. Interacts with KRT7 and KRT8. Interacts with EGFR; the interaction increases after agonist-induced stimulation in cancer-associated fibroblasts (CAF). Interacts with EGFR and ESR1. Interacts (via C-terminus tail motif) with DLG4 (via N-terminus tandem pair of PDZ domains); the interaction is direct and induces the increase of GPER1 protein levels residing at the plasma membrane surface in a estradiol-independent manner. Ubiquitinated; ubiquitination occurs at the plasma membrane and leads to proteasome-mediated degradation. In terms of processing, glycosylated. Expressed in the brain. Expressed in neurons of the hippocampus, hypothalamic paraventricular nucleus (PVN), supraoptic nucleus (SON) and the median eminence. Expressed in magnocellular neurosecretory cells (MNCs) which secrete oxytocin but not in MNCs which secrete vasopressin. Expressed in glial cells. Expressed in the nucleus ambiguous. Expressed in epithelial cells, in pachytene spermatocytes (PS) (at protein level). Expressed strongly in vascular endothelial cells and poorly in vascular smooth muscle cells (VSMC). Expressed in the brain, lung, pituitary gland, adrenal medulla, renal pelvis and ovary. Expressed in CA1 hippocampus. Expressed weakly in heart, skeletal muscle and kidney.

The protein resides in the nucleus. It is found in the cytoplasm. Its subcellular location is the perinuclear region. It localises to the cytoskeleton. The protein localises to the cytoplasmic vesicle membrane. The protein resides in the cell membrane. It is found in the basolateral cell membrane. Its subcellular location is the endoplasmic reticulum membrane. It localises to the early endosome. The protein localises to the recycling endosome. The protein resides in the golgi apparatus. It is found in the trans-Golgi network. Its subcellular location is the golgi apparatus membrane. It localises to the cell projection. The protein localises to the dendrite. The protein resides in the dendritic spine membrane. It is found in the axon. Its subcellular location is the postsynaptic density. It localises to the mitochondrion membrane. G-protein coupled estrogen receptor that binds to 17-beta-estradiol (E2) with high affinity, leading to rapid and transient activation of numerous intracellular signaling pathways. Stimulates cAMP production, calcium mobilization and tyrosine kinase Src inducing the release of heparin-bound epidermal growth factor (HB-EGF) and subsequent transactivation of the epidermal growth factor receptor (EGFR), activating downstream signaling pathways such as PI3K/Akt and ERK/MAPK. Mediates pleiotropic functions among others in the cardiovascular, endocrine, reproductive, immune and central nervous systems. Has a role in cardioprotection by reducing cardiac hypertrophy and perivascular fibrosis in a RAMP3-dependent manner. Regulates arterial blood pressure by stimulating vasodilation and reducing vascular smooth muscle and microvascular endothelial cell proliferation. Plays a role in blood glucose homeostasis contributing to the insulin secretion response by pancreatic beta cells. Triggers mitochondrial apoptosis during pachytene spermatocyte differentiation. Stimulates uterine epithelial cell proliferation. Enhances uterine contractility in response to oxytocin. Contributes to thymic atrophy by inducing apoptosis. Attenuates TNF-mediated endothelial expression of leukocyte adhesion molecules. Promotes neuritogenesis in developing hippocampal neurons. Plays a role in acute neuroprotection against NMDA-induced excitotoxic neuronal death. Increases firing activity and intracellular calcium oscillations in luteinizing hormone-releasing hormone (LHRH) neurons. Inhibits early osteoblast proliferation at growth plate during skeletal development. Inhibits mature adipocyte differentiation and lipid accumulation. Involved in the recruitment of beta-arrestin 2 ARRB2 at the plasma membrane in epithelial cells. Also functions as a receptor for aldosterone mediating rapid regulation of vascular contractibility through the PI3K/ERK signaling pathway. Involved in cancer progression regulation. Stimulates cancer-associated fibroblast (CAF) proliferation by a rapid genomic response through the EGFR/ERK transduction pathway. Associated with EGFR, may act as a transcription factor activating growth regulatory genes (c-fos, cyclin D1). Promotes integrin alpha-5/beta-1 and fibronectin (FN) matrix assembly in breast cancer cells. This chain is G-protein coupled estrogen receptor 1 (Gper1), found in Rattus norvegicus (Rat).